We begin with the raw amino-acid sequence, 529 residues long: Glutamyl-tRNA reductase (529 aa).

47–50 lines the substrate pocket; sequence TCNR. The active-site Nucleophile is cysteine 48. The disordered stretch occupies residues 56-80; sequence SPRQQAPAPPRPGSAPPPSDEELSR. A compositionally biased stretch (pro residues) spans 62–73; sequence PAPPRPGSAPPP. Substrate is bound by residues serine 125, 130–132, and glutamine 136; that span reads EPQ. An NADP(+)-binding site is contributed by 205-210; it reads GAGDMA. Positions 454–505 are disordered; the sequence is RGAVDGPPTPRSARGAAPPASGARGGGSPRHADPRPQAAEDNGVYARQPGGR. A compositionally biased stretch (low complexity) spans 464-475; sequence RSARGAAPPASG.

It belongs to the glutamyl-tRNA reductase family. In terms of assembly, homodimer.

The catalysed reaction is (S)-4-amino-5-oxopentanoate + tRNA(Glu) + NADP(+) = L-glutamyl-tRNA(Glu) + NADPH + H(+). The protein operates within porphyrin-containing compound metabolism; protoporphyrin-IX biosynthesis; 5-aminolevulinate from L-glutamyl-tRNA(Glu): step 1/2. Catalyzes the NADPH-dependent reduction of glutamyl-tRNA(Glu) to glutamate 1-semialdehyde (GSA). The sequence is that of Glutamyl-tRNA reductase from Sorangium cellulosum (strain So ce56) (Polyangium cellulosum (strain So ce56)).